Consider the following 497-residue polypeptide: tRNA-2-methylthio-N(6)-dimethylallyladenosine synthase (497 aa).

In terms of domain architecture, MTTase N-terminal spans 4–120 (RSYEVRTFGC…LPVLLERARH (117 aa)). Residues Cys13, Cys49, Cys83, Cys157, Cys161, and Cys164 each contribute to the [4Fe-4S] cluster site. The region spanning 143 to 374 (RASHHSAWVS…ALQDEVSWAQ (232 aa)) is the Radical SAM core domain. One can recognise a TRAM domain in the interval 376-445 (RELVGRRVEL…PHHLTADGPL (70 aa)).

This sequence belongs to the methylthiotransferase family. MiaB subfamily. As to quaternary structure, monomer. Requires [4Fe-4S] cluster as cofactor.

Its subcellular location is the cytoplasm. It carries out the reaction N(6)-dimethylallyladenosine(37) in tRNA + (sulfur carrier)-SH + AH2 + 2 S-adenosyl-L-methionine = 2-methylsulfanyl-N(6)-dimethylallyladenosine(37) in tRNA + (sulfur carrier)-H + 5'-deoxyadenosine + L-methionine + A + S-adenosyl-L-homocysteine + 2 H(+). In terms of biological role, catalyzes the methylthiolation of N6-(dimethylallyl)adenosine (i(6)A), leading to the formation of 2-methylthio-N6-(dimethylallyl)adenosine (ms(2)i(6)A) at position 37 in tRNAs that read codons beginning with uridine. The sequence is that of tRNA-2-methylthio-N(6)-dimethylallyladenosine synthase from Frankia alni (strain DSM 45986 / CECT 9034 / ACN14a).